The sequence spans 155 residues: SsrA-binding protein (155 aa).

This sequence belongs to the SmpB family.

It localises to the cytoplasm. In terms of biological role, required for rescue of stalled ribosomes mediated by trans-translation. Binds to transfer-messenger RNA (tmRNA), required for stable association of tmRNA with ribosomes. tmRNA and SmpB together mimic tRNA shape, replacing the anticodon stem-loop with SmpB. tmRNA is encoded by the ssrA gene; the 2 termini fold to resemble tRNA(Ala) and it encodes a 'tag peptide', a short internal open reading frame. During trans-translation Ala-aminoacylated tmRNA acts like a tRNA, entering the A-site of stalled ribosomes, displacing the stalled mRNA. The ribosome then switches to translate the ORF on the tmRNA; the nascent peptide is terminated with the 'tag peptide' encoded by the tmRNA and targeted for degradation. The ribosome is freed to recommence translation, which seems to be the essential function of trans-translation. This Streptococcus pneumoniae (strain Hungary19A-6) protein is SsrA-binding protein.